The following is an 80-amino-acid chain: Exodeoxyribonuclease 7 small subunit (80 aa).

The protein belongs to the XseB family. Heterooligomer composed of large and small subunits.

The protein resides in the cytoplasm. It carries out the reaction Exonucleolytic cleavage in either 5'- to 3'- or 3'- to 5'-direction to yield nucleoside 5'-phosphates.. Bidirectionally degrades single-stranded DNA into large acid-insoluble oligonucleotides, which are then degraded further into small acid-soluble oligonucleotides. The polypeptide is Exodeoxyribonuclease 7 small subunit (Vibrio parahaemolyticus serotype O3:K6 (strain RIMD 2210633)).